A 155-amino-acid polypeptide reads, in one-letter code: Aspartate carbamoyltransferase regulatory chain (155 aa).

The Zn(2+) site is built by Cys-113, Cys-118, Cys-139, and Cys-142.

The protein belongs to the PyrI family. Contains catalytic and regulatory chains. It depends on Zn(2+) as a cofactor.

Its function is as follows. Involved in allosteric regulation of aspartate carbamoyltransferase. This chain is Aspartate carbamoyltransferase regulatory chain, found in Methanosphaerula palustris (strain ATCC BAA-1556 / DSM 19958 / E1-9c).